Reading from the N-terminus, the 684-residue chain is Glycine--tRNA ligase beta subunit (684 aa).

The protein belongs to the class-II aminoacyl-tRNA synthetase family. In terms of assembly, tetramer of two alpha and two beta subunits.

Its subcellular location is the cytoplasm. It catalyses the reaction tRNA(Gly) + glycine + ATP = glycyl-tRNA(Gly) + AMP + diphosphate. This chain is Glycine--tRNA ligase beta subunit, found in Pseudomonas fluorescens (strain ATCC BAA-477 / NRRL B-23932 / Pf-5).